A 612-amino-acid polypeptide reads, in one-letter code: Alpha-glycerophosphate oxidase (612 aa).

21–49 (DLLIIGGGITGAGVALQAAASGLDTGLIE) provides a ligand contact to FAD. Residues 398-408 (VETSTSEKELD) are compositionally biased toward basic and acidic residues. Positions 398-418 (VETSTSEKELDPSAVSRGSSF) are disordered.

It belongs to the FAD-dependent glycerol-3-phosphate dehydrogenase family. The cofactor is FAD.

Its subcellular location is the cytoplasm. The enzyme catalyses sn-glycerol 3-phosphate + O2 = dihydroxyacetone phosphate + H2O2. The sequence is that of Alpha-glycerophosphate oxidase (glpO) from Streptococcus pyogenes serotype M3 (strain ATCC BAA-595 / MGAS315).